The sequence spans 926 residues: BTB/POZ domain-containing protein KCTD19 (926 aa).

Positions 18-72 constitute a BTB 1 domain; it reads NVGGWHFSVPRSKLSQFPDSLLWKEASALTSSESQRLFIDRDGSTFRHVHYYLYT. Phosphoserine is present on Ser270. A BTB 2 domain is found at 398–485; sequence IKVYVGSHWY…YHIPSLSEAL (88 aa). The tract at residues 673 to 751 is disordered; that stretch reads GSEAASQPST…PAPEQPLPEA (79 aa). The segment covering 730–742 has biased composition (basic and acidic residues); sequence DWSKQRTKERESP.

Identified in a complex with ZNF541, HDAC1 and HSPA2. Identified in a complex with ZNF541 and HDAC1. Identified in a complex with HDAC1, HDAC2, DNTTIP1 and ZNF541.

It localises to the nucleus. Transcription regulator which is essential for male fertility and for the completion of meiotic prophase in spermatocytes. Regulates progression of the pachytene stage of meiotic prophase and promotes the transcriptional activation activity ZNF541. Required for the organization of chromosomes during metaphase I. This Homo sapiens (Human) protein is BTB/POZ domain-containing protein KCTD19 (KCTD19).